The primary structure comprises 535 residues: GMP synthase [glutamine-hydrolyzing] (535 aa).

A Glutamine amidotransferase type-1 domain is found at 24-217; sequence KILIVDFGSQ…VRKVAGLKGD (194 aa). Cysteine 101 acts as the Nucleophile in catalysis. Active-site residues include histidine 191 and glutamate 193. Residues 218–410 enclose the GMPS ATP-PPase domain; that stretch reads WTMRAFREEA…LGLPEVFVGR (193 aa). Residue 245-251 participates in ATP binding; sequence SGGVDSA.

In terms of assembly, homodimer.

It catalyses the reaction XMP + L-glutamine + ATP + H2O = GMP + L-glutamate + AMP + diphosphate + 2 H(+). It participates in purine metabolism; GMP biosynthesis; GMP from XMP (L-Gln route): step 1/1. Catalyzes the synthesis of GMP from XMP. This Rhodopseudomonas palustris (strain BisB18) protein is GMP synthase [glutamine-hydrolyzing].